Consider the following 312-residue polypeptide: Short chain dehydrogenase pgmD (312 aa).

NADP(+)-binding residues include Val-46, Ile-47, Lys-171, Tyr-207, Lys-211, and Thr-242. Tyr-207 (proton donor) is an active-site residue. The Lowers pKa of active site Tyr role is filled by Lys-211.

It belongs to the short-chain dehydrogenases/reductases (SDR) family.

It participates in pigment biosynthesis. It functions in the pathway secondary metabolite biosynthesis. In terms of biological role, short chain dehydrogenase; part of the gene cluster that mediates the biosynthesis of pleosporalin A, ascomycone A, as well as a third cryptic naphthoquinone derived pigment, all responsible for the coloration of conidia. Essential for the production of pleosporalin A, but not the 2 other final products. The pathway begins with the biosynthesis of the cyclized heptaketide 3-acetonyl-1,6,8-trihydroxy-2-naphthaldehyde by the NR-PKS pgmA. The C-6 hydroxyl group is further methylated by the O-methyltransferase pgmB to yield fusarubinaldehyde which is in turn oxidized by the cytochrome P450 monooxygenase pgmC at C-9. The C-1 hydroxyl group is then methylated spontaneously. Although pgmE, pgmD and pgmH are essential for the production of pleosporalin A, it is not the case for the 2 other final products and it remains difficult to assign a specific function to each enzyme. PgmF and pgmG seem not to be involved in pigment biosynthesis although they were regulated by the cluster-specific transcription factor pgmR. This is Short chain dehydrogenase pgmD from Aspergillus terreus.